We begin with the raw amino-acid sequence, 816 residues long: Probable E3 ubiquitin-protein ligase hulA (816 aa).

Positions 1-112 constitute a C2 domain; the sequence is MGSNLPAQPN…QMGGDEMLTR (112 aa). Disordered stretches follow at residues 134 to 238 and 254 to 354; these read NLST…GWER and RTTT…YFVD. The segment covering 160–178 has biased composition (low complexity); sequence VPQVAPSSSHPAASGAAPV. Residues 181–192 show a composition bias toward polar residues; sequence SASNPSLNPQRV. Over residues 193–213 the composition is skewed to low complexity; the sequence is PSTTRPSSTAAPASAAGAAAS. Composition is skewed to polar residues over residues 214 to 227 and 254 to 267; these read NTHG…SFED and RTTT…NYNE. Residues 230 to 263 enclose the WW 1 domain; the sequence is GRLPAGWERREDNLGRTYYVDHNTRTTTWTRPSS. The span at 268-295 shows a compositional bias: basic and acidic residues; the sequence is HAQRSQREANMQLERRAHQSRMLPEDRT. A compositionally biased stretch (polar residues) spans 296 to 310; that stretch reads GANSPNLPESSQQAH. Residues 325–334 are compositionally biased toward low complexity; that stretch reads ATGATTAGTG. WW domains follow at residues 334-367 and 394-427; these read GELP…DPRR and GPLP…DPRL. Positions 483 to 816 constitute an HECT domain; the sequence is SASDLKKRLM…VEETLGFGQE (334 aa). Cysteine 784 functions as the Glycyl thioester intermediate in the catalytic mechanism.

The protein belongs to the RSP5/NEDD4 family. In terms of assembly, interacts with creD.

It localises to the cytoplasm. The catalysed reaction is S-ubiquitinyl-[E2 ubiquitin-conjugating enzyme]-L-cysteine + [acceptor protein]-L-lysine = [E2 ubiquitin-conjugating enzyme]-L-cysteine + N(6)-ubiquitinyl-[acceptor protein]-L-lysine.. Its pathway is protein modification; protein ubiquitination. Functionally, E3 ubiquitin-protein ligase which accepts ubiquitin from an E2 ubiquitin-conjugating enzyme in the form of a thioester and then directly transfers the ubiquitin to targeted substrates. Probably involved in the regulatory network controlling carbon source utilization. The polypeptide is Probable E3 ubiquitin-protein ligase hulA (hulA) (Neosartorya fischeri (strain ATCC 1020 / DSM 3700 / CBS 544.65 / FGSC A1164 / JCM 1740 / NRRL 181 / WB 181) (Aspergillus fischerianus)).